Consider the following 129-residue polypeptide: Prefoldin subunit 6 (129 aa).

Ala2 carries the N-acetylalanine modification. N6-acetyllysine is present on Lys21. Lys66 is modified (N6-acetyllysine; alternate). A Glycyl lysine isopeptide (Lys-Gly) (interchain with G-Cter in SUMO1); alternate cross-link involves residue Lys66. Residue Lys66 forms a Glycyl lysine isopeptide (Lys-Gly) (interchain with G-Cter in SUMO2); alternate linkage.

The protein belongs to the prefoldin subunit beta family. In terms of assembly, heterohexamer of two PFD-alpha type and four PFD-beta type subunits. Component of the PAQosome complex which is responsible for the biogenesis of several protein complexes and which consists of R2TP complex members RUVBL1, RUVBL2, RPAP3 and PIH1D1, URI complex members PFDN2, PFDN6, PDRG1, UXT and URI1 as well as ASDURF, POLR2E and DNAAF10/WDR92.

Binds specifically to cytosolic chaperonin (c-CPN) and transfers target proteins to it. Binds to nascent polypeptide chain and promotes folding in an environment in which there are many competing pathways for nonnative proteins. The sequence is that of Prefoldin subunit 6 (PFDN6) from Homo sapiens (Human).